Consider the following 113-residue polypeptide: Hydrogenase maturation factor HypA (113 aa).

Histidine 2 is a binding site for Ni(2+). Zn(2+)-binding residues include cysteine 73, cysteine 76, cysteine 89, and cysteine 92.

Belongs to the HypA/HybF family.

In terms of biological role, involved in the maturation of [NiFe] hydrogenases. Required for nickel insertion into the metal center of the hydrogenase. This is Hydrogenase maturation factor HypA from Azotobacter chroococcum mcd 1.